A 688-amino-acid chain; its full sequence is Collagen alpha-2(IX) chain (688 aa).

Residues 1–22 (MTAVPAPRSLFVLLQVLWLALA) form the signal peptide. The interval 26 to 162 (GPPGEPGPPG…PGKPGRPGTI (137 aa)) is triple-helical region 4 (COL4). A disordered region spans residues 26 to 171 (GPPGEPGPPG…IQGLEGSADF (146 aa)). Pro residues-rich tracts occupy residues 28–42 (PGEP…PPGV) and 105–126 (LPGP…PGPV). Positions 128–137 (LPGEIGTPGP) are enriched in low complexity. The segment covering 138 to 156 (KGDPGPEGPSGPPGPPGKP) has biased composition (pro residues). At P159 the chain carries 4-hydroxyproline. A nonhelical region 4 (NC4) region spans residues 163-179 (QGLEGSADFLCPTNCPA). S168 carries an O-linked (Xyl...) (glycosaminoglycan) serine glycan. The triple-helical region 3 (COL3) stretch occupies residues 180-518 (GVKGPQGLQG…PGRQGVVGRA (339 aa)). A 5-hydroxylysine modification is found at K182. K182 is a glycosylation site (O-linked (Gal...) hydroxylysine). The interval 183-517 (GPQGLQGVKG…QPGRQGVVGR (335 aa)) is disordered. Composition is skewed to low complexity over residues 289–314 (PQGI…PGIP) and 392–412 (RGPV…EQGP). Gly residues predominate over residues 435 to 444 (GPRGGVGDPG). Positions 502-517 (DRGVPGQPGRQGVVGR) are enriched in low complexity. Residues 519–548 (ASDQHIVDVVLKMIQEQLAEVAVSAKREAL) are nonhelical region 3 (NC3). Residues 549-631 (GAAGMVGLPG…PGLPGRPGQA (83 aa)) are triple-helical region 2 (COL2). Positions 553–664 (MVGLPGPPGP…GPVGLPGFCE (112 aa)) are disordered. Basic and acidic residues predominate over residues 598 to 610 (KRGEKGDRGEMGH). The segment at 632–633 (IN) is nonhelical region 2 (NC2). The interval 634-663 (GKDGDRGSPGAPGEAGRPGRPGPVGLPGFC) is triple-helical region 1 (COL1). Residues 664-688 (EPAACLGASAYTSARLTEPGSIKGP) form a nonhelical region 1 (NC1) region.

The protein belongs to the fibril-associated collagens with interrupted helices (FACIT) family. In terms of assembly, heterotrimer of an alpha 1(IX), an alpha 2(IX) and an alpha 3(IX) chain. The chains are linked to each other by interchain disulfide bonds. Trimers are also cross-linked via hydroxylysines. Covalently linked to the telopeptides of type II collagen by lysine-derived cross-links. In terms of processing, prolines at the third position of the tripeptide repeating unit (G-X-Y) are hydroxylated in some or all of the chains.

The protein localises to the secreted. The protein resides in the extracellular space. It localises to the extracellular matrix. In terms of biological role, structural component of hyaline cartilage and vitreous of the eye. This is Collagen alpha-2(IX) chain (Col9a2) from Mus musculus (Mouse).